The sequence spans 278 residues: Cysteine-rich repeat secretory protein 18 (278 aa).

A signal peptide spans 1–32 (MYSSSSVSKRFVLVPIVVVVTTQLLLVRNVSS). 2 consecutive Gnk2-homologous domains span residues 39–147 (YLHH…SLDT) and 160–267 (PSAK…LYPF).

This sequence belongs to the cysteine-rich repeat secretory protein family.

It localises to the secreted. This Arabidopsis thaliana (Mouse-ear cress) protein is Cysteine-rich repeat secretory protein 18 (CRRSP18).